The sequence spans 159 residues: MKENVLDVLMYLFQNYMDSEVESQPTKESLEVELTEAGFHHAEIGKAFDWLEGLALLQQSEPRRFPVTNSSIRIFTLHEKEKLDTECRGFLLFLEQVGVLDSMTRELIIDRVMALEAEDFDLEHLKWVILMVLSHQPGQEAAYAWMEDLVFDEVSDLLH.

This sequence belongs to the Smg family.

The protein is Protein Smg homolog of Nitrosococcus oceani (strain ATCC 19707 / BCRC 17464 / JCM 30415 / NCIMB 11848 / C-107).